Here is a 154-residue protein sequence, read N- to C-terminus: MRILGIDPGLARVGYGVIETAGREQTMLDCGIIRTDSGRPEGERMVEIARDLRQLIRAWKPELAAVEKFFFYRSSNTIAVVQARGVVIMTLSRFGLPIVEFPPMQIKQALTGHGHADKDEVLEAVMRELSLETPPRPDDAADALAVALTGWFQR.

Active-site residues include Asp-7, Glu-67, and Asp-139. Mg(2+)-binding residues include Asp-7, Glu-67, and Asp-139.

It belongs to the RuvC family. Homodimer which binds Holliday junction (HJ) DNA. The HJ becomes 2-fold symmetrical on binding to RuvC with unstacked arms; it has a different conformation from HJ DNA in complex with RuvA. In the full resolvosome a probable DNA-RuvA(4)-RuvB(12)-RuvC(2) complex forms which resolves the HJ. Requires Mg(2+) as cofactor.

The protein resides in the cytoplasm. It catalyses the reaction Endonucleolytic cleavage at a junction such as a reciprocal single-stranded crossover between two homologous DNA duplexes (Holliday junction).. Its function is as follows. The RuvA-RuvB-RuvC complex processes Holliday junction (HJ) DNA during genetic recombination and DNA repair. Endonuclease that resolves HJ intermediates. Cleaves cruciform DNA by making single-stranded nicks across the HJ at symmetrical positions within the homologous arms, yielding a 5'-phosphate and a 3'-hydroxyl group; requires a central core of homology in the junction. The consensus cleavage sequence is 5'-(A/T)TT(C/G)-3'. Cleavage occurs on the 3'-side of the TT dinucleotide at the point of strand exchange. HJ branch migration catalyzed by RuvA-RuvB allows RuvC to scan DNA until it finds its consensus sequence, where it cleaves and resolves the cruciform DNA. This chain is Crossover junction endodeoxyribonuclease RuvC, found in Synechococcus sp. (strain WH7803).